The following is a 229-amino-acid chain: Aquaporin Z (229 aa).

2 consecutive transmembrane segments (helical) span residues 8–28 (FFGT…AAGV) and 33–53 (IGYL…AYAI). The NPA 1 motif lies at 62-64 (NPA). The next 3 helical transmembrane spans lie at 81-101 (LPYV…LYLI), 131-151 (AALV…LGAT), and 158-178 (GFAP…SIPV). The NPA 2 motif lies at 184–186 (NPA). A helical transmembrane segment spans residues 199–219 (AVSQLWLFWVAPILGAVLGAL).

It belongs to the MIP/aquaporin (TC 1.A.8) family. As to quaternary structure, homotetramer.

It localises to the cell inner membrane. It catalyses the reaction H2O(in) = H2O(out). In terms of biological role, channel that permits osmotically driven movement of water in both directions. It is involved in the osmoregulation and in the maintenance of cell turgor during volume expansion in rapidly growing cells. It mediates rapid entry or exit of water in response to abrupt changes in osmolarity. The sequence is that of Aquaporin Z from Pseudomonas aeruginosa (strain ATCC 15692 / DSM 22644 / CIP 104116 / JCM 14847 / LMG 12228 / 1C / PRS 101 / PAO1).